Reading from the N-terminus, the 152-residue chain is Natriuretic peptides A (152 aa).

A signal peptide spans 1-24; it reads MGSSAITVSFLLFLAFQLPGQTGA. Propeptides lie at residues 25–122 and 92–102; these read NPVY…TAPR and EGGVLGRGPWE. The tract at residues 58 to 101 is disordered; sequence PSQVLSEQNEEAGAPLSPLSEMPPWMGEVNPAQREGGVLGRGPW. A Phosphoserine modification is found at Ser128. Cys129 and Cys145 are disulfide-bonded. An important for degradation of atrial natriuretic peptide by IDE region spans residues 146-150; the sequence is NSFRY.

It belongs to the natriuretic peptide family. In terms of assembly, homodimer; disulfide-linked antiparallel dimer. The precursor molecule is proteolytically cleaved by CORIN at Arg-122 to produce the atrial natriuretic peptide. Undergoes further proteolytic cleavage by unknown proteases to give rise to long-acting natriuretic peptide, vessel dilator and kaliuretic peptide. Additional processing gives rise to the auriculin and atriopeptin peptides. In the kidneys, alternative processing by an unknown protease results in the peptide urodilatin. Post-translationally, cleavage by MME initiates degradation of the factor and thereby regulates its activity. Degradation by IDE results in reduced activation of NPR1 (in vitro). During IDE degradation, the resulting products can temporarily stimulate NPR2 to produce cGMP, before the fragments are completely degraded and inactivated by IDE (in vitro). In terms of processing, degraded by IDE. Phosphorylation on Ser-128 decreases vasorelaxant activity.

The protein resides in the secreted. It localises to the perikaryon. The protein localises to the cell projection. Functionally, hormone that plays a key role in mediating cardio-renal homeostasis, and is involved in vascular remodeling and regulating energy metabolism. Acts by specifically binding and stimulating NPR1 to produce cGMP, which in turn activates effector proteins, such as PRKG1, that drive various biological responses. Regulates vasodilation, natriuresis, diuresis and aldosterone synthesis and is therefore essential for regulating blood pressure, controlling the extracellular fluid volume and maintaining the fluid-electrolyte balance. Also involved in inhibiting cardiac remodeling and cardiac hypertrophy by inducing cardiomyocyte apoptosis and attenuating the growth of cardiomyocytes and fibroblasts. Plays a role in female pregnancy by promoting trophoblast invasion and spiral artery remodeling in uterus, and thus prevents pregnancy-induced hypertension. In adipose tissue, acts in various cGMP- and PKG-dependent pathways to regulate lipid metabolism and energy homeostasis. This includes up-regulating lipid metabolism and mitochondrial oxygen utilization by activating the AMP-activated protein kinase (AMPK), and increasing energy expenditure by acting via MAPK11 to promote the UCP1-dependent thermogenesis of brown adipose tissue. Binds the clearance receptor NPR3 which removes the hormone from circulation. Its function is as follows. May have a role in cardio-renal homeostasis through regulation of natriuresis, diuresis, vasodilation, and inhibiting aldosterone synthesis. In vitro, promotes the production of cGMP and induces vasodilation. May promote natriuresis, at least in part, by enhancing prostaglandin E2 synthesis resulting in the inhibition of renal Na+-K+-ATPase. However reports on the involvement of this peptide in mammal blood volume and blood pressure homeostasis are conflicting; according to a report, in vivo it is not sufficient to activate cGMP and does not inhibit collecting duct transport nor effect diuresis and natriuresis. Appears to bind to specific receptors that are distinct from the receptors bound by atrial natriuretic peptide and vessel dilator. Possibly enhances protein excretion in urine by decreasing proximal tubular protein reabsorption. In terms of biological role, may have a role in cardio-renal homeostasis through regulation of natriuresis, diuresis, and vasodilation. In vitro, promotes the production of cGMP and induces vasodilation. May promote natriuresis, at least in part, by enhancing prostaglandin E2 synthesis resulting in the inhibition of renal Na+-K+-ATPase. However reports on the involvement of this peptide in mammal blood volume and blood pressure homeostasis are conflicting; according to a report it is not sufficient to activate cGMP and does not inhibit collecting duct transport nor effect diuresis and natriuresis. Appears to bind to specific receptors that are distinct from the receptors bound by the atrial natriuretic and long-acting natriuretic peptides. Possibly functions in protein excretion in urine by maintaining the integrity of the proximal tubules and enhancing protein excretion by decreasing proximal tubular protein reabsorption. May have a role in cardio-renal homeostasis through regulation of diuresis and inhibiting aldosterone synthesis. In vitro, promotes the production of cGMP and induces vasodilation. May promote natriuresis, at least in part, by enhancing prostaglandin E2 synthesis resulting in the inhibition of renal Na+-K+-ATPase. May have a role in potassium excretion but not sodium excretion (natriuresis). Possibly enhances protein excretion in urine by decreasing proximal tubular protein reabsorption. Functionally, hormone produced in the kidneys that appears to be important for maintaining cardio-renal homeostasis. Mediates vasodilation, natriuresis and diuresis primarily in the renal system, in order to maintain the extracellular fluid volume and control the fluid-electrolyte balance. Specifically binds and stimulates cGMP production by renal transmembrane receptors, likely NPR1. Urodilatin not ANP, may be the natriuretic peptide responsible for the regulation of sodium and water homeostasis in the kidney. Its function is as follows. May have a role in cardio-renal homeostasis through regulation of natriuresis and vasodilation. In vivo promotes natriuresis and in vitro, vasodilates renal artery strips. In terms of biological role, may have a role in cardio-renal homeostasis through regulation of regulation of natriuresis and vasodilation. In vivo promotes natriuresis. In vitro, vasodilates intestinal smooth muscle but not smooth muscle strips. May have a role in cardio-renal homeostasis through regulation of natriuresis and vasodilation. In vivo promotes natriuresis. In vitro, selectively vasodilates intestinal and vascular smooth muscle strips. Functionally, may have a role in cardio-renal homeostasis through regulation of natriuresis and vasodilation. In vivo promotes natriuresis. In vitro, selectively vasodilates intestinal smooth muscle but not vascular smooth muscle strips. This Bos taurus (Bovine) protein is Natriuretic peptides A (NPPA).